Here is a 447-residue protein sequence, read N- to C-terminus: MYRVAIVGRPNVGKSSLFNRIIGKRKAIVEDIPGVTRDRIVSTAEWRGVTFEVVDTGGYIESDKDTFAPYIRKQIEKELELSDAFILVVDGKEGLTPADKEIARILHRTDKPVYVAVNKIDNPEMEKAIYEFYELGFEKVFPVSSIQKYGVADLLDAVVQDIPEYEREASKEVGEKEEKSDVIKVAIVGKPNAGKSSLLNAILGEERAVVSEIPGTTRDVVDTLFEWKDQKFLFLDTAGLRKKSKVDYGIEFFSIGRTLDAIKKADVIVHVIDAQQGATEQDTKIAHLIQKYTKPAVIVINKIDTVPPKSEVLNRIKNQVRERLYFIPYAPIVMTSAKNRKGIKQLLKEITDVYNQSWKRVGTGQLNRAIKQILSLRQPPSYHGKPLKIYYATQLEGKPPCFLLFVNHPEGFKEHFLRFLENNLRTVLGFEKAPIKLLLRGKEERRD.

EngA-type G domains lie at 2–166 (YRVA…PEYE) and 183–358 (IKVA…NQSW). GTP is bound by residues 8 to 15 (GRPNVGKS), 55 to 59 (DTGGY), 118 to 121 (NKID), 189 to 196 (GKPNAGKS), 236 to 240 (DTAGL), and 301 to 304 (NKID). The region spanning 359–443 (KRVGTGQLNR…PIKLLLRGKE (85 aa)) is the KH-like domain.

This sequence belongs to the TRAFAC class TrmE-Era-EngA-EngB-Septin-like GTPase superfamily. EngA (Der) GTPase family. As to quaternary structure, associates with the 50S ribosomal subunit.

GTPase that plays an essential role in the late steps of ribosome biogenesis. The sequence is that of GTPase Der from Persephonella marina (strain DSM 14350 / EX-H1).